We begin with the raw amino-acid sequence, 142 residues long: Transcriptional regulator MraZ (142 aa).

SpoVT-AbrB domains lie at 5–51 and 77–120; these read ASAL…PRPE and AMDV…DSQT.

The protein belongs to the MraZ family. Forms oligomers.

It is found in the cytoplasm. The protein resides in the nucleoid. This chain is Transcriptional regulator MraZ, found in Burkholderia ambifaria (strain MC40-6).